The following is a 180-amino-acid chain: Adenine phosphoribosyltransferase (180 aa).

Position 2 is an N-acetylserine (S2). S15 and S30 each carry phosphoserine. Phosphotyrosine is present on Y60. S66 carries the phosphoserine modification. K114 carries the post-translational modification N6-acetyllysine. Residue T135 is modified to Phosphothreonine.

This sequence belongs to the purine/pyrimidine phosphoribosyltransferase family. Homodimer.

Its subcellular location is the cytoplasm. It carries out the reaction AMP + diphosphate = 5-phospho-alpha-D-ribose 1-diphosphate + adenine. It functions in the pathway purine metabolism; AMP biosynthesis via salvage pathway; AMP from adenine: step 1/1. Catalyzes a salvage reaction resulting in the formation of AMP, that is energically less costly than de novo synthesis. The sequence is that of Adenine phosphoribosyltransferase from Mastomys natalensis (African soft-furred rat).